The sequence spans 305 residues: Transmembrane epididymal protein 1 (305 aa).

The helical transmembrane segment at 4–24 threads the bilayer; it reads FIGHISPGLFLVFYGLYQAII. Residue asparagine 32 is glycosylated (N-linked (GlcNAc...) asparagine). Transmembrane regions (helical) follow at residues 51 to 71, 100 to 120, 124 to 144, 159 to 179, 187 to 207, and 223 to 243; these read LWQI…LIVY, LTMF…RSVL, LVLL…LLLV, SLLI…LWAP, IETF…FILF, and IMLV…CMLG. The disordered stretch occupies residues 285–305; that stretch reads EQQDRDDQAPLLSKSSPCDRA.

This sequence belongs to the TMEM45 family.

The protein resides in the membrane. The polypeptide is Transmembrane epididymal protein 1 (Teddm1) (Rattus norvegicus (Rat)).